We begin with the raw amino-acid sequence, 107 residues long: Small polypeptide DEVIL 9 (107 aa).

Residues 1–12 (MDEKWRLSKKDA) show a composition bias toward basic and acidic residues. A disordered region spans residues 1-79 (MDEKWRLSKK…EKGSITQKYS (79 aa)). Residues 9 to 29 (KKDALAASCSSSSTSSKSKFS) traverse the membrane as a helical segment. A compositionally biased stretch (low complexity) spans 13 to 65 (LAASCSSSSTSSKSKFSRSFSTSASSSKAPAFVRSSSTKCSVPSSSSSSISRS). Residues 73–104 (SITQKYSSLAKEQKGRFYIMRRCVAMLVCWHK) are required for DVL/RTFL small polypeptide activity.

It belongs to the DVL/RTFL small polypeptides family.

It is found in the cell membrane. Functionally, small polypeptide acting as a regulatory molecule which coordinates cellular responses required for differentiation, growth and development, probably by restricting polar cell proliferation in lateral organs and coordinating socket cell recruitment and differentiation at trichome sites. The protein is Small polypeptide DEVIL 9 of Arabidopsis thaliana (Mouse-ear cress).